The following is a 406-amino-acid chain: Argininosuccinate synthase (406 aa).

Residues alanine 11–serine 19 and alanine 38 contribute to the ATP site. Residues tyrosine 91 and serine 96 each coordinate L-citrulline. Glycine 121 contributes to the ATP binding site. 3 residues coordinate L-aspartate: threonine 123, asparagine 127, and aspartate 128. Asparagine 127 is a binding site for L-citrulline. L-citrulline contacts are provided by arginine 131, serine 181, serine 190, glutamate 266, and tyrosine 278.

It belongs to the argininosuccinate synthase family. Type 1 subfamily. In terms of assembly, homotetramer.

The protein localises to the cytoplasm. It carries out the reaction L-citrulline + L-aspartate + ATP = 2-(N(omega)-L-arginino)succinate + AMP + diphosphate + H(+). The protein operates within amino-acid biosynthesis; L-arginine biosynthesis; L-arginine from L-ornithine and carbamoyl phosphate: step 2/3. This Campylobacter jejuni subsp. jejuni serotype O:2 (strain ATCC 700819 / NCTC 11168) protein is Argininosuccinate synthase.